Consider the following 424-residue polypeptide: Enolase (424 aa).

Glutamine 162 contacts (2R)-2-phosphoglycerate. The active-site Proton donor is the glutamate 204. Residues aspartate 241, glutamate 284, and aspartate 311 each coordinate Mg(2+). (2R)-2-phosphoglycerate contacts are provided by lysine 336, arginine 365, serine 366, and lysine 387. Lysine 336 (proton acceptor) is an active-site residue.

It belongs to the enolase family. It depends on Mg(2+) as a cofactor.

It localises to the cytoplasm. The protein resides in the secreted. The protein localises to the cell surface. The catalysed reaction is (2R)-2-phosphoglycerate = phosphoenolpyruvate + H2O. The protein operates within carbohydrate degradation; glycolysis; pyruvate from D-glyceraldehyde 3-phosphate: step 4/5. Its function is as follows. Catalyzes the reversible conversion of 2-phosphoglycerate (2-PG) into phosphoenolpyruvate (PEP). It is essential for the degradation of carbohydrates via glycolysis. This Sinorhizobium medicae (strain WSM419) (Ensifer medicae) protein is Enolase.